Here is a 626-residue protein sequence, read N- to C-terminus: MGKTKLKPVEDVNSEVVDEVEKAEEVEEQRNDREQEEEQKEEEAPKSFEELGLDSRLIRALTKKGIEKPTLIQQSAIPYILEGKDVVARAKTGSGKTLAYLLPLLQKLFSADSVSKKKLAPSAFILVPSRELCQQVYTEVSSLIELCRVQLKAVQLTSSMSASDMRNALAGLPEILVSTPACIPKCFAAGVLEPTAVSESLSILVLDEADLLLSYGYEDNLRSVTSIIPRRCQCLLMSATTSSDVEKLKKLILHNPIVLTLTEDNDKEEAVPSNVQQFWISCSAQDKLLHILALLKLEVVQKKILIFINTIDMGFRLKLFLEKFGIKSAILNGELPQNSRLHILEQFNAGLFDYLIATDDNSQTKKQKEEAKGEANKENKKNNKRSKPKLDAEFGVVRGIDFKKVHTVINFDMPQSVTGYIHRIGRTGRAYSSGSSVSLISPDEMEGFEDIKSFLASDKNKDIDIITPFPLLTENAVESLRYRAEDVAKSVTKIAVRESRAQDLRNEIINSEKLKAHFEANPRDLDLLRHDKPLSKTAPAPHLKDIPEYLVDAKTQEASKMVKLARAAMGNTRRSGGGGGRNNKNKKRSRKGSDPLKTFNPNGSKRGAVGQKDGKDSSSTKKQKTV.

The segment at 1-48 is disordered; sequence MGKTKLKPVEDVNSEVVDEVEKAEEVEEQRNDREQEEEQKEEEAPKSF. Positions 9–47 form a coiled coil; it reads VEDVNSEVVDEVEKAEEVEEQRNDREQEEEQKEEEAPKS. The segment covering 12-27 has biased composition (acidic residues); it reads VNSEVVDEVEKAEEVE. The Q motif signature appears at 46-74; it reads KSFEELGLDSRLIRALTKKGIEKPTLIQQ. In terms of domain architecture, Helicase ATP-binding spans 77–259; the sequence is IPYILEGKDV…KLILHNPIVL (183 aa). 90–97 lines the ATP pocket; the sequence is AKTGSGKT. The short motif at 207–210 is the DEAD box element; that stretch reads DEAD. The region spanning 293-477 is the Helicase C-terminal domain; the sequence is ALLKLEVVQK…PFPLLTENAV (185 aa). Residues 356–385 are a coiled coil; the sequence is IATDDNSQTKKQKEEAKGEANKENKKNNKR. Positions 363–381 are enriched in basic and acidic residues; that stretch reads QTKKQKEEAKGEANKENKK. Disordered stretches follow at residues 363–388 and 568–626; these read QTKK…RSKP and AMGN…QKTV.

The protein belongs to the DEAD box helicase family. DDX56/DBP9 subfamily.

The enzyme catalyses ATP + H2O = ADP + phosphate + H(+). This Arabidopsis thaliana (Mouse-ear cress) protein is DEAD-box ATP-dependent RNA helicase 16 (RH16).